The primary structure comprises 874 residues: Alanine--tRNA ligase (874 aa).

Zn(2+) contacts are provided by His562, His566, Cys664, and His668.

The protein belongs to the class-II aminoacyl-tRNA synthetase family. Requires Zn(2+) as cofactor.

The protein localises to the cytoplasm. The catalysed reaction is tRNA(Ala) + L-alanine + ATP = L-alanyl-tRNA(Ala) + AMP + diphosphate. In terms of biological role, catalyzes the attachment of alanine to tRNA(Ala) in a two-step reaction: alanine is first activated by ATP to form Ala-AMP and then transferred to the acceptor end of tRNA(Ala). Also edits incorrectly charged Ser-tRNA(Ala) and Gly-tRNA(Ala) via its editing domain. In Shewanella denitrificans (strain OS217 / ATCC BAA-1090 / DSM 15013), this protein is Alanine--tRNA ligase.